A 197-amino-acid chain; its full sequence is ATP-dependent Clp protease proteolytic subunit (197 aa).

Residue serine 102 is the Nucleophile of the active site. Residue histidine 127 is part of the active site.

The protein belongs to the peptidase S14 family. In terms of assembly, fourteen ClpP subunits assemble into 2 heptameric rings which stack back to back to give a disk-like structure with a central cavity, resembling the structure of eukaryotic proteasomes.

Its subcellular location is the cytoplasm. It carries out the reaction Hydrolysis of proteins to small peptides in the presence of ATP and magnesium. alpha-casein is the usual test substrate. In the absence of ATP, only oligopeptides shorter than five residues are hydrolyzed (such as succinyl-Leu-Tyr-|-NHMec, and Leu-Tyr-Leu-|-Tyr-Trp, in which cleavage of the -Tyr-|-Leu- and -Tyr-|-Trp bonds also occurs).. In terms of biological role, cleaves peptides in various proteins in a process that requires ATP hydrolysis. Has a chymotrypsin-like activity. Plays a major role in the degradation of misfolded proteins. This is ATP-dependent Clp protease proteolytic subunit from Buchnera aphidicola subsp. Schizaphis graminum (strain Sg).